We begin with the raw amino-acid sequence, 434 residues long: Serine hydroxymethyltransferase (434 aa).

Residues L133 and 137-139 (GHL) contribute to the (6S)-5,6,7,8-tetrahydrofolate site. K242 is subject to N6-(pyridoxal phosphate)lysine.

It belongs to the SHMT family. As to quaternary structure, homodimer. Pyridoxal 5'-phosphate serves as cofactor.

It is found in the cytoplasm. The enzyme catalyses (6R)-5,10-methylene-5,6,7,8-tetrahydrofolate + glycine + H2O = (6S)-5,6,7,8-tetrahydrofolate + L-serine. It functions in the pathway one-carbon metabolism; tetrahydrofolate interconversion. It participates in amino-acid biosynthesis; glycine biosynthesis; glycine from L-serine: step 1/1. Its function is as follows. Catalyzes the reversible interconversion of serine and glycine with tetrahydrofolate (THF) serving as the one-carbon carrier. This reaction serves as the major source of one-carbon groups required for the biosynthesis of purines, thymidylate, methionine, and other important biomolecules. Also exhibits THF-independent aldolase activity toward beta-hydroxyamino acids, producing glycine and aldehydes, via a retro-aldol mechanism. In Methylobacterium radiotolerans (strain ATCC 27329 / DSM 1819 / JCM 2831 / NBRC 15690 / NCIMB 10815 / 0-1), this protein is Serine hydroxymethyltransferase.